The primary structure comprises 343 residues: Ribosomal RNA small subunit methyltransferase C (343 aa).

This sequence belongs to the methyltransferase superfamily. RsmC family. Monomer.

The protein resides in the cytoplasm. The enzyme catalyses guanosine(1207) in 16S rRNA + S-adenosyl-L-methionine = N(2)-methylguanosine(1207) in 16S rRNA + S-adenosyl-L-homocysteine + H(+). In terms of biological role, specifically methylates the guanine in position 1207 of 16S rRNA in the 30S particle. This Escherichia coli (strain ATCC 8739 / DSM 1576 / NBRC 3972 / NCIMB 8545 / WDCM 00012 / Crooks) protein is Ribosomal RNA small subunit methyltransferase C.